The following is a 134-amino-acid chain: ATP synthase epsilon chain (134 aa).

The protein belongs to the ATPase epsilon chain family. As to quaternary structure, F-type ATPases have 2 components, CF(1) - the catalytic core - and CF(0) - the membrane proton channel. CF(1) has five subunits: alpha(3), beta(3), gamma(1), delta(1), epsilon(1). CF(0) has three main subunits: a, b and c.

It localises to the cell membrane. Its function is as follows. Produces ATP from ADP in the presence of a proton gradient across the membrane. The chain is ATP synthase epsilon chain from Clostridium botulinum (strain Alaska E43 / Type E3).